We begin with the raw amino-acid sequence, 471 residues long: Putative multidrug resistance protein MdtD (471 aa).

Topologically, residues 1-12 (MTDLPDSTRWQL) are periplasmic. Residues 13 to 33 (WIVAFGFFMQSLDTTIVNTAI) traverse the membrane as a helical segment. Residues 34–48 (PSMAQSLGESPLHMH) are Cytoplasmic-facing. The chain crosses the membrane as a helical span at residues 49–69 (MVIVSYVLTVAVMLPASGWLA). Over 70-76 (DKVGVRN) the chain is Periplasmic. A helical transmembrane segment spans residues 77–97 (IFFTAIVLFTLGSLFCALSGT). Residues 98 to 101 (LNEL) are Cytoplasmic-facing. The helical transmembrane segment at 102-124 (LLARALQGVGGAMMVPVGRLTVM) threads the bilayer. At 125 to 137 (KIVPREQYMAAMT) the chain is on the periplasmic side. The chain crosses the membrane as a helical span at residues 138–158 (FVTLPGQVGPLLGPALGGLLV). Residues 159–164 (EYASWH) are Cytoplasmic-facing. A helical transmembrane segment spans residues 165–185 (WIFLINIPVGIIGAIATLMLM). Topologically, residues 186 to 196 (PNYTMQTRRFD) are periplasmic. A helical membrane pass occupies residues 197 to 217 (LSGFLLLAVGMAVLTLALDGS). At 218–224 (KGTGLSP) the chain is on the cytoplasmic side. The chain crosses the membrane as a helical span at residues 225–245 (LAIAGLVAVGVVALVLYLLHA). Over 246 to 262 (RNNNRALFSLKLFRTRT) the chain is Periplasmic. Residues 263–283 (FSLGLAGSFAGRIGSGMLPFM) traverse the membrane as a helical segment. Over 284 to 285 (TP) the chain is Cytoplasmic. The chain crosses the membrane as a helical span at residues 286–306 (VFLQIGLGFSPFHAGLMMIPM). Topologically, residues 307 to 341 (VLGSMGMKRIVVQVVNRFGYRRVLVATTLGLSLVT) are periplasmic. A helical membrane pass occupies residues 342 to 362 (LLFMTTALLGWYYVLPFVLFL). Residues 363–395 (QGMVNSTRFSSMNTLTLKDLPDNLASSGNSLLS) lie on the Cytoplasmic side of the membrane. The chain crosses the membrane as a helical span at residues 396 to 416 (MIMQLSMSIGVTIAGLLLGLF). The Periplasmic portion of the chain corresponds to 417–430 (GSQHVSVDSGTTQT). A helical membrane pass occupies residues 431–451 (VFMYTWLSMAFIIALPAFIFA). Over 452 to 471 (RVPNDTHQNVAISRRKRSAQ) the chain is Cytoplasmic.

This sequence belongs to the major facilitator superfamily. TCR/Tet family.

It localises to the cell inner membrane. In Shigella flexneri serotype 5b (strain 8401), this protein is Putative multidrug resistance protein MdtD.